Reading from the N-terminus, the 198-residue chain is Coagulation factor XIII A chain (198 aa).

The tract at residues 1-36 (MSESSGTAFGGRRAIPPNTSNAAENDPPTVELQGLV) is disordered. At Ser-2 the chain carries N-acetylserine. Positions 2–38 (SESSGTAFGGRRAIPPNTSNAAENDPPTVELQGLVPR) are cleaved as a propeptide — activation peptide.

This sequence belongs to the transglutaminase superfamily. Transglutaminase family. Tetramer of two A chains (F13A1) and two B (F13B) chains. The cofactor is Ca(2+). In terms of processing, the activation peptide is released by thrombin.

The protein localises to the cytoplasm. It is found in the secreted. The catalysed reaction is L-glutaminyl-[protein] + L-lysyl-[protein] = [protein]-L-lysyl-N(6)-5-L-glutamyl-[protein] + NH4(+). Factor XIII is activated by thrombin and calcium ion to a transglutaminase that catalyzes the formation of gamma-glutamyl-epsilon-lysine cross-links between fibrin chains, thus stabilizing the fibrin clot. Also cross-link alpha-2-plasmin inhibitor, or fibronectin, to the alpha chains of fibrin. The chain is Coagulation factor XIII A chain (F13A1) from Bos taurus (Bovine).